Consider the following 159-residue polypeptide: Large ribosomal subunit protein mL43 (159 aa).

Positions 123-159 are disordered; the sequence is SPSIQGQWHPFTNKPTALGGLRPREVQNPAPTQRPAQ.

This sequence belongs to the mitochondrion-specific ribosomal protein mL43 family. As to quaternary structure, component of the mitochondrial ribosome large subunit (39S) which comprises a 16S rRNA and about 50 distinct proteins.

It is found in the mitochondrion. The polypeptide is Large ribosomal subunit protein mL43 (MRPL43) (Bos taurus (Bovine)).